The chain runs to 227 residues: PKHD-type hydroxylase Bphy_5374 (227 aa).

The 101-residue stretch at 79-179 folds into the Fe2OG dioxygenase domain; the sequence is KVYPPLFNRY…RVASFFWVQS (101 aa). Residues histidine 97, aspartate 99, and histidine 160 each coordinate Fe cation. Arginine 170 is a 2-oxoglutarate binding site.

It depends on Fe(2+) as a cofactor. L-ascorbate serves as cofactor.

The chain is PKHD-type hydroxylase Bphy_5374 from Paraburkholderia phymatum (strain DSM 17167 / CIP 108236 / LMG 21445 / STM815) (Burkholderia phymatum).